Here is a 122-residue protein sequence, read N- to C-terminus: Glycine cleavage system H protein (122 aa).

One can recognise a Lipoyl-binding domain in the interval 19–101 (MVTVGVTHYA…ETEGWLWKMT (83 aa)). Position 60 is an N6-lipoyllysine (Lys60).

Belongs to the GcvH family. In terms of assembly, the glycine cleavage system is composed of four proteins: P, T, L and H. The cofactor is (R)-lipoate.

Functionally, the glycine cleavage system catalyzes the degradation of glycine. The H protein shuttles the methylamine group of glycine from the P protein to the T protein. The polypeptide is Glycine cleavage system H protein (Bartonella tribocorum (strain CIP 105476 / IBS 506)).